Here is a 670-residue protein sequence, read N- to C-terminus: MAELRAETQHGGIWPNYGNPVQMNTGRYNTQESSVPVGSAASSHLVRPRSRQHTMDYHNAPYHHGRPAQEDGDGYERYPHPSLMNIPSITTGMKRSYSQVDQTPYTEMVQDLRDDYKPAMNHDQKLLSFKKVGDKHTIVDHKGRIHEIEIEAQLHGMFFLSEFPSPGDGNVLNAELTCYRRNLFQISGNICFPQIPLSVMLETGETSQIKNMEVTISAIESVDGHPVRLIVIPWKTPPPNSPEVNQAPDQEPPSLPLIPWSEEEEDNGGDHYAIYPIGWRRLQFRIATANNGRRKELQQHFVLHLKLHGTLANGTKLVLSELTTAPIVVRGRSPRNFQARKEIPLLGSSAGSRGQTLVETGHSIVAQAVALNKPPYDSRPRVSSMDLPRTAFTFTSAKQMPQSPMQMRSNSYPTSWNPSSQVSMPHNPGSTSYPTTSMAGPEPYPKMPLSGAPSYTAEPQEMPIQQTSMPSMQLSMVAQDQQPSAPIRTQYATYASAPPPHLSLPSTADSSLNVPRYVDSNPRPSKSPRHGSHGSLTNETASGEYRYGPPSYLGNSSSDISPQSQHHPPTSGAGAGGASSGAYGTPSQEGGASAPASAPTSAAPPRDYFPPSQSWTSTAGEGQTSSYTNGGDRSYSFPTGVKTEPHSQPSHSGAPVPGVYGNNHYAWNAT.

Positions 106 to 341 (TEMVQDLRDD…RSPRNFQARK (236 aa)) form a DNA-binding region, NDT80. Polar residues-rich tracts occupy residues 394–438 (FTSA…TTSM) and 553–568 (LGNS…QHHP). Disordered stretches follow at residues 394-457 (FTSA…SYTA) and 496-670 (SAPP…WNAT). Positions 592–605 (ASAPASAPTSAAPP) are enriched in low complexity. A compositionally biased stretch (polar residues) spans 611-631 (PSQSWTSTAGEGQTSSYTNGG).

Its subcellular location is the nucleus. The protein resides in the cytoplasm. Functionally, transcription factor that acts as a positive regulator of nonrepressible acid phosphatase activity. Is a major regulator of responses to nitrogen and carbon starvation and is essential for the expression of genes involved in vegetative incompatibility (like pin-c, het-6, and tol). Vegetative incompatibility is a non-self-recognition system ubiquitous in filamentous fungi which results in programmed cell death. This is Transcription factor vib-1 (vib-1) from Neurospora crassa (strain ATCC 24698 / 74-OR23-1A / CBS 708.71 / DSM 1257 / FGSC 987).